Consider the following 255-residue polypeptide: Uridylate kinase (255 aa).

The disordered stretch occupies residues 1–21 (MSAAAAGRGERLNHAGNPGHR). ATP is bound at residue 30 to 33 (KLGG). Gly71 contacts UMP. ATP is bound by residues Gly72 and Arg76. UMP contacts are provided by residues Asp91 and 152-159 (MGLPYFST). The ATP site is built by Phe185 and Asp188.

Belongs to the UMP kinase family. In terms of assembly, homohexamer.

The protein resides in the cytoplasm. It carries out the reaction UMP + ATP = UDP + ADP. Its pathway is pyrimidine metabolism; CTP biosynthesis via de novo pathway; UDP from UMP (UMPK route): step 1/1. Its activity is regulated as follows. Inhibited by UTP. Catalyzes the reversible phosphorylation of UMP to UDP. The chain is Uridylate kinase from Mycobacterium leprae (strain TN).